The chain runs to 148 residues: MASKRILKELKDLQKDPPTSCSAGPVAEDMFHWQATIMGPAESPYSGGVFLVTIHFPPDYPFKPPKVAFRTKVFHPNINSNGSICLDILKEQWSPALTISKVLLSICSLLTDPNPDDPLVPEIAHMYKTDRAKYEATARNWTQKYAMG.

A UBC core domain is found at 1 to 147 (MASKRILKEL…ARNWTQKYAM (147 aa)). Cys85 serves as the catalytic Glycyl thioester intermediate.

Belongs to the ubiquitin-conjugating enzyme family. As to quaternary structure, interacts with CIP8, CHIP, NLA and XERICO. As to expression, highest expression in young stems, old leaves. Lowest levels in floral buds, anthers and young leaves.

The catalysed reaction is S-ubiquitinyl-[E1 ubiquitin-activating enzyme]-L-cysteine + [E2 ubiquitin-conjugating enzyme]-L-cysteine = [E1 ubiquitin-activating enzyme]-L-cysteine + S-ubiquitinyl-[E2 ubiquitin-conjugating enzyme]-L-cysteine.. Its pathway is protein modification; protein ubiquitination. In terms of biological role, accepts the ubiquitin from the E1 complex and catalyzes its covalent attachment to other proteins. Mediates the selective degradation of short-lived and abnormal proteins. The protein is Ubiquitin-conjugating enzyme E2 8 (UBC8) of Arabidopsis thaliana (Mouse-ear cress).